A 292-amino-acid polypeptide reads, in one-letter code: MALDNINLNFSSDKQIEKCEKLSSIDNIDSLVLKKKRKVEIPEYSLIASNYFTIDKHFEHKHDKGEIYSGIKNAFELRNERATYSDIPESMAIKENILIPDQDIKAREKINIGDMRGIFSYNKSGNADKNFERSHTSSVNPDNLLESDNRNGQIGLKNHSLSIDKNIADIISLLNGSVAKSFELPVMNKNTADITPSMSLQEKSIVENDKNVFQKNSEMTYHFKQWGAGHSVSISVESGSFVLKPSDQFVGNKLDLILKQDAEGNYRFDSSQHNKGNKNNSTGYNEQSEEEC.

Cysteine 19 and cysteine 292 form a disulfide bridge. Disordered regions lie at residues 129-151 and 267-292; these read KNFE…DNRN and RFDS…EEEC. Residues 273 to 286 are compositionally biased toward polar residues; it reads HNKGNKNNSTGYNE.

It belongs to the SpaN family.

Its subcellular location is the cell outer membrane. Functionally, required for surface presentation of invasion plasmid antigens. Could play a role in preserving the translocation competence of the ipa antigens. Required for invasion and for secretion of IpaB and IpaD proteins. The sequence is that of Surface presentation of antigens protein SpaN (spaN) from Shigella sonnei.